A 39-amino-acid polypeptide reads, in one-letter code: Antimicrobial peptide CHP1 (39 aa).

3 disulfide bridges follow: Cys-6-Cys-28, Cys-13-Cys-34, and Cys-18-Cys-35.

Functionally, bactericidal activity; inhibits S.aureus and E.coli. The protein is Antimicrobial peptide CHP1 of Gallus gallus (Chicken).